The following is a 1373-amino-acid chain: Disease resistance protein RRS1 (1373 aa).

The TIR domain occupies 5–146; that stretch reads EKDEEFVCIS…EIVRDVYETH (142 aa). Residues 170–421 form the NB-ARC domain; the sequence is IGIRCVGIWG…LLEGCGFFPH (252 aa). 179 to 186 provides a ligand contact to ATP; the sequence is GMPGIGKT. 9 LRR repeats span residues 498–522, 535–553, 554–575, 577–598, 621–646, 665–688, 742–766, 768–793, and 831–854; these read SEEIEGLFLDTSNLRFDLQPSAFKN, NPEVHPVINFPTGSLHSLP, NELRLLHWENYPLKSLPQNFDP, HLVEINMPYSQLQKLWGGTKNL, AENLEVIDLQGCTRLQNFPAAGRLLR, PPNIEKLHLQGTGILALPVSTVKP, LPNMANLDLNVLDLSGCSSLNSIQG, PRFLKQLYLGGTAIREVPQLPQSLEI, and PRNLKELYFAGTTLREVPQLPLSL. Residues 988–1005 carry the Nuclear localization signal motif; the sequence is RNFHCWAPGKVVPKVRKD. A DNA-binding region (WRKY) is located at residues 1204-1272; it reads IPAIDEGDLW…YLSEHNHPRP (69 aa). The tract at residues 1300 to 1323 is disordered; sequence RVFQNKDEPNKPHLPSSSTPPGNA.

Interacts with PopP2, a R.solanacearum type III effector.

It is found in the nucleus. Functionally, transcription factor. Interacts specifically with the W box (5'-(T)TGAC[CT]-3'), a frequently occurring elicitor-responsive cis-acting element. Also acts as a disease resistance protein involved in resistance to fungal and bacterial pathogens, including R.solanacearum, P.syringae pv. tomato and C.higginsianum. The polypeptide is Disease resistance protein RRS1 (Arabidopsis thaliana (Mouse-ear cress)).